A 274-amino-acid polypeptide reads, in one-letter code: MGTLSVNQNKLQKRLRRLAGEAITDYNMIEDGDKVMVCLSGGKDSYTMLDVLLHLQKVAPIKFDIVAVNMDQKQPGFPEHVLPAYLKELGVEYHIVEKDTYSVVKELVPEGKTTCSLCSRLRRGTLYTFADEIGATKMALGHHRDDIVETFFLNMFFNGALKGMPPKLRADDGRNVVIRPLAYCSEKDIQAYSDMKEFPIIPCNLCGSQENLQRQVVKDMLVEWERKHPGRTESIFRALQNVAPSQLADRNLFDFTSLKIDESATPRFLDVLNI.

The PP-loop motif motif lies at 40–45 (SGGKDS). [4Fe-4S] cluster is bound by residues Cys-115, Cys-118, and Cys-206.

The protein belongs to the TtcA family. Homodimer. Requires Mg(2+) as cofactor. [4Fe-4S] cluster serves as cofactor.

It is found in the cytoplasm. It catalyses the reaction cytidine(32) in tRNA + S-sulfanyl-L-cysteinyl-[cysteine desulfurase] + AH2 + ATP = 2-thiocytidine(32) in tRNA + L-cysteinyl-[cysteine desulfurase] + A + AMP + diphosphate + H(+). Its pathway is tRNA modification. Catalyzes the ATP-dependent 2-thiolation of cytidine in position 32 of tRNA, to form 2-thiocytidine (s(2)C32). The sulfur atoms are provided by the cysteine/cysteine desulfurase (IscS) system. The sequence is that of tRNA-cytidine(32) 2-sulfurtransferase from Pseudomonas entomophila (strain L48).